The following is a 338-amino-acid chain: Protein mono-ADP-ribosyltransferase PARP11 (338 aa).

Glu13 is subject to ADP-ribosyl glutamic acid. Position 18 is an N6-(ADP-ribosyl)lysine (Lys18). In terms of domain architecture, WWE spans 22–106 (NEVDDMDTSD…TTGKQRLIKR (85 aa)). Residues Cys56 and Cys72 each carry the ADP-ribosylcysteine modification. Asp87 is subject to ADP-ribosyl aspartic acid. The 216-residue stretch at 123-338 (IPMPPHWENV…IYPEYLIDFH (216 aa)) folds into the PARP catalytic domain.

This sequence belongs to the ARTD/PARP family. Interacts with PARP12; this interaction plays a role in zika virus suppression. Post-translationally, auto-mono-ADP-ribosylated.

The protein resides in the nucleus. Its subcellular location is the nuclear pore complex. It catalyses the reaction L-aspartyl-[protein] + NAD(+) = 4-O-(ADP-D-ribosyl)-L-aspartyl-[protein] + nicotinamide. The catalysed reaction is L-cysteinyl-[protein] + NAD(+) = S-(ADP-D-ribosyl)-L-cysteinyl-[protein] + nicotinamide + H(+). The enzyme catalyses L-glutamyl-[protein] + NAD(+) = 5-O-(ADP-D-ribosyl)-L-glutamyl-[protein] + nicotinamide. It carries out the reaction L-lysyl-[protein] + NAD(+) = N(6)-(ADP-D-ribosyl)-L-lysyl-[protein] + nicotinamide + H(+). Its function is as follows. Mono-ADP-ribosyltransferase that mediates mono-ADP-ribosylation of target proteins. Plays a role in nuclear envelope stability and nuclear remodeling during spermiogenesis. Inhibits the type I interferon activated signaling pathway. Mechanistically, mono-ADP-ribosylates beta-TrCP/BTRC to promote IFNAR1 ubiquitination and protect BTRC from ubiquitin-proteasome degradation. Additionally, acts as an antiviral factor by cooperating with PARP12 to suppress Zika virus replication, independent of IFNAR1 regulation or intrinsic PARP enzymatic activity. Instead, facilitates the degradation of viral NS1 and NS3 proteins, potentially disrupting viral replication. This Homo sapiens (Human) protein is Protein mono-ADP-ribosyltransferase PARP11.